A 462-amino-acid chain; its full sequence is Glycoprotein endo-alpha-1,2-mannosidase (462 aa).

Residues 1 to 9 (MAKFRRRTC) lie on the Cytoplasmic side of the membrane. Residues 10–30 (ILLSLFILFIFSLMMGLKMLW) traverse the membrane as a helical; Signal-anchor for type II membrane protein segment. Over 31–462 (PNAASFGPPF…YALDQQQPAS (432 aa)) the chain is Lumenal. Residues 60–462 (DFQRSDRINM…YALDQQQPAS (403 aa)) form a catalytic region.

The protein belongs to the glycosyl hydrolase 99 family. Undergoes proteolytic cleavage in the C-terminal region.

It is found in the golgi apparatus membrane. It carries out the reaction N-{alpha-Glc-(1-&gt;3)-alpha-Man-(1-&gt;2)-alpha-Man-(1-&gt;2)-alpha-Man-(1-&gt;3)-[alpha-Man-(1-&gt;2)-alpha-Man-(1-&gt;3)-[alpha-Man-(1-&gt;2)-alpha-Man-(1-&gt;6)]-alpha-Man-(1-&gt;6)]-beta-Man-(1-&gt;4)-beta-GlcNAc-(1-&gt;4)-beta-GlcNAc}-L-asparaginyl-[protein] + H2O = alpha-D-glucosyl-(1-&gt;3)-D-mannopyranose + N(4)-{alpha-D-Man-(1-&gt;2)-alpha-D-Man-(1-&gt;3)-[alpha-D-Man-(1-&gt;2)-alpha-D-Man-(1-&gt;3)-[alpha-D-Man-(1-&gt;2)-alpha-D-Man-(1-&gt;6)]-alpha-D-Man-(1-&gt;6)]-beta-D-Man-(1-&gt;4)-beta-D-GlaNAc-(1-&gt;4)-beta-D-GlcNAc}-L-asparaginyl-[protein] (N-glucan mannose isomer 8A1,2,3B1,2). The polypeptide is Glycoprotein endo-alpha-1,2-mannosidase (Manea) (Mus musculus (Mouse)).